The chain runs to 1029 residues: Eukaryotic translation initiation factor 3 subunit A (1029 aa).

Residues 92-121 are a coiled coil; it reads LKKFIELAEQKVTEAQAKADEIQSSLESAA. One can recognise a PCI domain in the interval 339-523; that stretch reads MTKAASFVLL…GVLTFESDIF (185 aa). The stretch at 606–903 forms a coiled coil; sequence TRRAIIEKRK…EEEAEQRRAA (298 aa). Basic and acidic residues-rich tracts occupy residues 621–632, 644–666, 797–901, and 913–924; these read ALQKKQREEENR, EQQR…EQDR, TEKR…EQRR, and GPAREASPERTA. Disordered stretches follow at residues 621-666 and 797-1029; these read ALQK…EQDR and TEKR…KQQQ. Residues 943-960 show a composition bias toward low complexity; the sequence is AKAAASAGEQPAAAQEAT. The segment covering 977 to 993 has biased composition (basic and acidic residues); sequence ATRDGPSDSRDLSHARE.

This sequence belongs to the eIF-3 subunit A family. As to quaternary structure, component of the eukaryotic translation initiation factor 3 (eIF-3) complex.

The protein localises to the cytoplasm. Its function is as follows. RNA-binding component of the eukaryotic translation initiation factor 3 (eIF-3) complex, which is involved in protein synthesis of a specialized repertoire of mRNAs and, together with other initiation factors, stimulates binding of mRNA and methionyl-tRNAi to the 40S ribosome. The eIF-3 complex specifically targets and initiates translation of a subset of mRNAs involved in cell proliferation. This Coccidioides immitis (strain RS) (Valley fever fungus) protein is Eukaryotic translation initiation factor 3 subunit A.